A 404-amino-acid chain; its full sequence is Glucose-1-phosphate adenylyltransferase (404 aa).

Residues Y99, G164, E179 to K180, and S197 contribute to the alpha-D-glucose 1-phosphate site.

It belongs to the bacterial/plant glucose-1-phosphate adenylyltransferase family. Homotetramer.

The catalysed reaction is alpha-D-glucose 1-phosphate + ATP + H(+) = ADP-alpha-D-glucose + diphosphate. The protein operates within glycan biosynthesis; glycogen biosynthesis. Involved in the biosynthesis of ADP-glucose, a building block required for the elongation reactions to produce glycogen. Catalyzes the reaction between ATP and alpha-D-glucose 1-phosphate (G1P) to produce pyrophosphate and ADP-Glc. The sequence is that of Glucose-1-phosphate adenylyltransferase from Nocardia farcinica (strain IFM 10152).